The following is a 457-amino-acid chain: COBRA-like protein 3 (457 aa).

The first 35 residues, 1 to 35, serve as a signal peptide directing secretion; that stretch reads MAVGGAGSSRSVAPCCCCAVLLAAALLFSAPATTE. 9 N-linked (GlcNAc...) asparagine glycosylation sites follow: Asn45, Asn170, Asn178, Asn217, Asn242, Asn258, Asn326, Asn341, and Asn361. A lipid anchor (GPI-anchor amidated asparagine) is attached at Asn430. Positions 431–457 are cleaved as a propeptide — removed in mature form; it reads ASPLTKQPLTLSVLVFSIVLATLLAYA. Residues 437 to 457 form a helical membrane-spanning segment; it reads QPLTLSVLVFSIVLATLLAYA.

Belongs to the COBRA family.

The protein resides in the cell membrane. Involved in determining the orientation of cell expansion, probably by playing an important role in cellulose deposition. May act by recruiting cellulose synthesizing complexes to discrete positions on the cell surface. The polypeptide is COBRA-like protein 3 (BC1L4) (Oryza sativa subsp. japonica (Rice)).